We begin with the raw amino-acid sequence, 657 residues long: Acetyl-coenzyme A synthetase (657 aa).

CoA-binding positions include Arg192 to Lys195 and Thr311. ATP-binding positions include Gly387–Pro389, Asp411–Thr416, Asp504, Arg519, and Arg530. Mg(2+)-binding residues include His543 and Val546. Arg592 contributes to the CoA binding site. Position 617 is an N6-acetyllysine (Lys617).

This sequence belongs to the ATP-dependent AMP-binding enzyme family. Mg(2+) is required as a cofactor. In terms of processing, acetylated. Deacetylation by the SIR2-homolog deacetylase activates the enzyme.

It catalyses the reaction acetate + ATP + CoA = acetyl-CoA + AMP + diphosphate. Functionally, catalyzes the conversion of acetate into acetyl-CoA (AcCoA), an essential intermediate at the junction of anabolic and catabolic pathways. AcsA undergoes a two-step reaction. In the first half reaction, AcsA combines acetate with ATP to form acetyl-adenylate (AcAMP) intermediate. In the second half reaction, it can then transfer the acetyl group from AcAMP to the sulfhydryl group of CoA, forming the product AcCoA. The protein is Acetyl-coenzyme A synthetase of Campylobacter jejuni subsp. jejuni serotype O:6 (strain 81116 / NCTC 11828).